Reading from the N-terminus, the 354-residue chain is Kelch domain-containing protein 8B (354 aa).

Kelch repeat units follow at residues 1–31 (MSAG…HQDG), 32–79 (HLLV…VLGK), 81–127 (VLVV…ERDG), 128–175 (MVYA…LHGN), 176–222 (KIYV…MAEG), 224–281 (VFSL…SLGG), 282–329 (HIVA…QAGP), and 331–354 (LFVI…RDGV).

Its subcellular location is the cytoplasm. The protein localises to the midbody. Its function is as follows. Involved in pinching off the separated nuclei at the cleavage furrow and in cytokinesis. Required for mitotic integrity and maintenance of chromosomal stability. Protects cells against mitotic errors, centrosomal amplification, micronucleus formation and aneuploidy. Plays a key role of midbody function involving abscission of the daughter cells during cytokinesis and appropriate chromosomal and nuclear segregation into the daughter cells. The chain is Kelch domain-containing protein 8B from Homo sapiens (Human).